The following is a 70-amino-acid chain: MAIQSKYTNTQVEALISELLAVLAKHQAPTDLSLMVLGNCVTHLLENKVPSESRQAVAEQFAKALVKSVK.

This sequence belongs to the UPF0352 family.

The chain is UPF0352 protein Sden_2336 from Shewanella denitrificans (strain OS217 / ATCC BAA-1090 / DSM 15013).